We begin with the raw amino-acid sequence, 393 residues long: Dwarfin sma-3 (393 aa).

The 130-residue stretch at 10–139 (PAVKKLLGWK…YQRLSRPQGL (130 aa)) folds into the MH1 domain. The Zn(2+) site is built by Cys-65, Cys-110, Cys-124, and His-129. Residues 136 to 190 (PQGLNSSMPSPQPISSPNTIWQSSGSSTASCASSPSPSVFSEDGGEVQVHQRPPP) are disordered. The span at 141-176 (SSMPSPQPISSPNTIWQSSGSSTASCASSPSPSVFS) shows a compositional bias: low complexity. One can recognise an MH2 domain in the interval 197–393 (WAQITYFELN…TNLMEPNSMT (197 aa)).

The protein belongs to the dwarfin/SMAD family.

The protein localises to the cytoplasm. The protein resides in the nucleus. In terms of biological role, involved in TGF-beta pathway. Plays a role in male tail tip morphogenesis. The sequence is that of Dwarfin sma-3 from Caenorhabditis elegans.